Here is a 630-residue protein sequence, read N- to C-terminus: ATP-dependent zinc metalloprotease FtsH 2 (630 aa).

Residues 1-8 (MNNNPNRR) are Cytoplasmic-facing. Residues 9–29 (GSLIGPLFIYFILAMLIFMSI) traverse the membrane as a helical segment. Residues 30-110 (SQLNTSNITE…YIQNTGASWW (81 aa)) are Periplasmic-facing. Residues 111–131 (VTMLIYMLPLIILMFFWFWMF) form a helical membrane-spanning segment. Residues 132 to 630 (RRSGTGEGIP…KETNLFVSYA (499 aa)) lie on the Cytoplasmic side of the membrane. 203–210 (GPPGTGKT) serves as a coordination point for ATP. H425 contacts Zn(2+). E426 is an active-site residue. Zn(2+) contacts are provided by H429 and D502.

The protein in the central section; belongs to the AAA ATPase family. This sequence in the C-terminal section; belongs to the peptidase M41 family. In terms of assembly, homohexamer. Requires Zn(2+) as cofactor.

It is found in the cell inner membrane. Acts as a processive, ATP-dependent zinc metallopeptidase for both cytoplasmic and membrane proteins. Plays a role in the quality control of integral membrane proteins. This chain is ATP-dependent zinc metalloprotease FtsH 2, found in Petrotoga mobilis (strain DSM 10674 / SJ95).